A 198-amino-acid chain; its full sequence is Probable GTP-binding protein EngB (198 aa).

An EngB-type G domain is found at 21–195; it reads NFSEVAFLGR…EDIIIDQTLG (175 aa). Residues 29 to 36, 56 to 60, 81 to 84, 151 to 154, and 174 to 176 each bind GTP; these read GRSNVGKS, GKTQL, DLPG, TKCD, and VSN. Mg(2+) contacts are provided by Ser36 and Thr58.

This sequence belongs to the TRAFAC class TrmE-Era-EngA-EngB-Septin-like GTPase superfamily. EngB GTPase family. Mg(2+) is required as a cofactor.

Its function is as follows. Necessary for normal cell division and for the maintenance of normal septation. The chain is Probable GTP-binding protein EngB from Campylobacter jejuni subsp. jejuni serotype O:6 (strain 81116 / NCTC 11828).